The sequence spans 130 residues: Protein TraH (130 aa).

A disordered region spans residues 1–78 (MSEPKDQSIE…ALEENRRPKA (78 aa)). A compositionally biased stretch (low complexity) spans 37 to 54 (PEQATAGQPPAEATAPTP).

In terms of biological role, the initiation process of transfer DNA synthesis requires the interaction of at least three plasmid-specific components (TraH, TraI, and TraJ) at the transfer origin resulting in the assembly of a specialized nucleoprotein complex - the relaxosome. This is Protein TraH (traH) from Escherichia coli.